The primary structure comprises 432 residues: Adenylosuccinate synthetase (432 aa).

GTP contacts are provided by residues 12–18 (GDEGKGK) and 40–42 (GHT). Residue D13 is the Proton acceptor of the active site. Mg(2+) is bound by residues D13 and G40. Residues 13–16 (DEGK), 38–41 (NAGH), T132, R146, Q226, T241, and R305 each bind IMP. H41 acts as the Proton donor in catalysis. 301–307 (TVTGRKR) is a substrate binding site. Residues R307, 333 to 335 (KLD), and 415 to 417 (STS) each bind GTP.

The protein belongs to the adenylosuccinate synthetase family. In terms of assembly, homodimer. The cofactor is Mg(2+).

The protein localises to the cytoplasm. It carries out the reaction IMP + L-aspartate + GTP = N(6)-(1,2-dicarboxyethyl)-AMP + GDP + phosphate + 2 H(+). Its pathway is purine metabolism; AMP biosynthesis via de novo pathway; AMP from IMP: step 1/2. Functionally, plays an important role in the de novo pathway of purine nucleotide biosynthesis. Catalyzes the first committed step in the biosynthesis of AMP from IMP. The sequence is that of Adenylosuccinate synthetase from Sinorhizobium fredii (strain NBRC 101917 / NGR234).